Consider the following 354-residue polypeptide: Protein RecA (354 aa).

An ATP-binding site is contributed by 67-74 (GPESSGKT).

The protein belongs to the RecA family.

The protein resides in the cytoplasm. Functionally, can catalyze the hydrolysis of ATP in the presence of single-stranded DNA, the ATP-dependent uptake of single-stranded DNA by duplex DNA, and the ATP-dependent hybridization of homologous single-stranded DNAs. It interacts with LexA causing its activation and leading to its autocatalytic cleavage. The polypeptide is Protein RecA (Hamiltonella defensa subsp. Acyrthosiphon pisum (strain 5AT)).